Here is a 125-residue protein sequence, read N- to C-terminus: MRRNGKEGKDRAPGRPQRKGQEVASRPWIFRGLDRNRVTAKNILWHELIGLKAKIIRASHPELVGIEGYVLDETRNTLTICGERVWVIPKDVVELEFEVGDKRIRINGRELIGRPEMRLKKRWRR.

Residues 1 to 13 (MRRNGKEGKDRAP) are compositionally biased toward basic and acidic residues. Positions 1-24 (MRRNGKEGKDRAPGRPQRKGQEVA) are disordered.

It belongs to the eukaryotic/archaeal RNase P protein component 1 family. As to quaternary structure, consists of a catalytic RNA component and at least 4-5 protein subunits.

The protein resides in the cytoplasm. The catalysed reaction is Endonucleolytic cleavage of RNA, removing 5'-extranucleotides from tRNA precursor.. Its function is as follows. Part of ribonuclease P, a protein complex that generates mature tRNA molecules by cleaving their 5'-ends. This Thermococcus onnurineus (strain NA1) protein is Ribonuclease P protein component 1.